We begin with the raw amino-acid sequence, 128 residues long: Large ribosomal subunit protein uL22 (128 aa).

The protein belongs to the universal ribosomal protein uL22 family. In terms of assembly, part of the 50S ribosomal subunit.

Functionally, this protein binds specifically to 23S rRNA; its binding is stimulated by other ribosomal proteins, e.g. L4, L17, and L20. It is important during the early stages of 50S assembly. It makes multiple contacts with different domains of the 23S rRNA in the assembled 50S subunit and ribosome. Its function is as follows. The globular domain of the protein is located near the polypeptide exit tunnel on the outside of the subunit, while an extended beta-hairpin is found that lines the wall of the exit tunnel in the center of the 70S ribosome. This Methylocella silvestris (strain DSM 15510 / CIP 108128 / LMG 27833 / NCIMB 13906 / BL2) protein is Large ribosomal subunit protein uL22.